Here is a 390-residue protein sequence, read N- to C-terminus: Exodeoxyribonuclease 7 large subunit (390 aa).

This sequence belongs to the XseA family. Heterooligomer composed of large and small subunits.

The protein resides in the cytoplasm. It catalyses the reaction Exonucleolytic cleavage in either 5'- to 3'- or 3'- to 5'-direction to yield nucleoside 5'-phosphates.. Functionally, bidirectionally degrades single-stranded DNA into large acid-insoluble oligonucleotides, which are then degraded further into small acid-soluble oligonucleotides. The chain is Exodeoxyribonuclease 7 large subunit from Synechococcus sp. (strain CC9311).